Consider the following 408-residue polypeptide: 8-amino-7-oxononanoate synthase (408 aa).

Arginine 20 provides a ligand contact to substrate. 119 to 120 (GY) is a binding site for pyridoxal 5'-phosphate. A substrate-binding site is contributed by histidine 144. Residues serine 190, histidine 218, and threonine 246 each coordinate pyridoxal 5'-phosphate. At lysine 249 the chain carries N6-(pyridoxal phosphate)lysine. Residue threonine 372 participates in substrate binding.

It belongs to the class-II pyridoxal-phosphate-dependent aminotransferase family. BioF subfamily. As to quaternary structure, homodimer. It depends on pyridoxal 5'-phosphate as a cofactor.

It catalyses the reaction 6-carboxyhexanoyl-[ACP] + L-alanine + H(+) = (8S)-8-amino-7-oxononanoate + holo-[ACP] + CO2. It participates in cofactor biosynthesis; biotin biosynthesis. Catalyzes the decarboxylative condensation of pimeloyl-[acyl-carrier protein] and L-alanine to produce 8-amino-7-oxononanoate (AON), [acyl-carrier protein], and carbon dioxide. The protein is 8-amino-7-oxononanoate synthase of Leptothrix cholodnii (strain ATCC 51168 / LMG 8142 / SP-6) (Leptothrix discophora (strain SP-6)).